Consider the following 165-residue polypeptide: Transmembrane protein 128 (165 aa).

4 consecutive transmembrane segments (helical) span residues 49–69 (NIHS…VDFF), 81–101 (WFLC…YCIV), 119–139 (LIPI…IALW), and 144–164 (FFTP…ITLL).

The protein localises to the membrane. The sequence is that of Transmembrane protein 128 (TMEM128) from Homo sapiens (Human).